The following is a 26-amino-acid chain: AMP deaminase 1 (26 aa).

This sequence belongs to the metallo-dependent hydrolases superfamily. Adenosine and AMP deaminases family. As to quaternary structure, homotetramer. Zn(2+) serves as cofactor.

It carries out the reaction AMP + H2O + H(+) = IMP + NH4(+). Its pathway is purine metabolism; IMP biosynthesis via salvage pathway; IMP from AMP: step 1/1. Functionally, AMP deaminase plays a critical role in energy metabolism. The polypeptide is AMP deaminase 1 (AMPD1) (Oryctolagus cuniculus (Rabbit)).